The chain runs to 192 residues: Transcription termination/antitermination protein NusG (192 aa).

This sequence belongs to the NusG family.

Its function is as follows. Participates in transcription elongation, termination and antitermination. The sequence is that of Transcription termination/antitermination protein NusG from Rickettsia prowazekii (strain Madrid E).